Reading from the N-terminus, the 623-residue chain is DNA-directed RNA polymerase subunit beta' (623 aa).

Zn(2+)-binding residues include C70, C72, C85, and C88. Mg(2+) is bound by residues D466, D468, and D470.

It belongs to the RNA polymerase beta' chain family. RpoC1 subfamily. In terms of assembly, in plastids the minimal PEP RNA polymerase catalytic core is composed of four subunits: alpha, beta, beta', and beta''. When a (nuclear-encoded) sigma factor is associated with the core the holoenzyme is formed, which can initiate transcription. The cofactor is Mg(2+). Zn(2+) serves as cofactor.

It localises to the plastid. The protein localises to the chloroplast. It catalyses the reaction RNA(n) + a ribonucleoside 5'-triphosphate = RNA(n+1) + diphosphate. DNA-dependent RNA polymerase catalyzes the transcription of DNA into RNA using the four ribonucleoside triphosphates as substrates. This Rhodomonas salina (Cryptomonas salina) protein is DNA-directed RNA polymerase subunit beta'.